The chain runs to 37 residues: Neuropeptide Y2-like conopeptide (37 aa).

Position 37 is a tyrosine amide (Tyr-37).

This sequence belongs to the NPY family. In terms of tissue distribution, expressed by the venom duct.

Its subcellular location is the secreted. Its function is as follows. Causes hyperactivity such as jumping, rapid circling and tail flicking, after intraventicular injection into mouse brain. This chain is Neuropeptide Y2-like conopeptide, found in Conus betulinus (Beech cone).